The sequence spans 215 residues: Large ribosomal subunit protein uL4 (215 aa).

Residues 46–72 form a disordered region; the sequence is TAKSKNRAEVSGGGRKPWAQKGGGRAR. Positions 56-71 are enriched in gly residues; it reads SGGGRKPWAQKGGGRA.

This sequence belongs to the universal ribosomal protein uL4 family. As to quaternary structure, part of the 50S ribosomal subunit.

Functionally, one of the primary rRNA binding proteins, this protein initially binds near the 5'-end of the 23S rRNA. It is important during the early stages of 50S assembly. It makes multiple contacts with different domains of the 23S rRNA in the assembled 50S subunit and ribosome. Forms part of the polypeptide exit tunnel. In Helicobacter pylori (strain Shi470), this protein is Large ribosomal subunit protein uL4.